Reading from the N-terminus, the 70-residue chain is V-type proton ATPase subunit e1 (70 aa).

Transmembrane regions (helical) follow at residues 1–21 (MGFLITTLIFVVVGIIASLCV) and 36–56 (LTLVITATVCCWMMWAIVYIA).

This sequence belongs to the V-ATPase e1/e2 subunit family. V-ATPase is a heteromultimeric enzyme composed of a peripheral catalytic V1 complex (components A to H) attached to an integral membrane V0 proton pore complex (components: a, c, c'', d and e).

The protein localises to the golgi apparatus. Its subcellular location is the trans-Golgi network membrane. Subunit of the integral membrane V0 complex of vacuolar ATPase. V-ATPase is responsible for acidifying a variety of intracellular compartments in eukaryotic cells. The sequence is that of V-type proton ATPase subunit e1 (VHA-e1) from Arabidopsis thaliana (Mouse-ear cress).